The chain runs to 374 residues: uncharacterized protein (374 aa).

Positions 182–201 (PALGESPQGQKSSASSDKAV) are disordered. The segment covering 188–197 (PQGQKSSASS) has biased composition (polar residues).

This is an uncharacterized protein from Rattus norvegicus (Rat).